The following is a 684-amino-acid chain: DNA helicase IV (684 aa).

In terms of domain architecture, UvrD-like helicase ATP-binding spans 195-505 (SPLNPAQARA…CDLDTTYRFN (311 aa)). Residues 216 to 223 (AGAGSGKT) and Arg503 each bind ATP.

This sequence belongs to the helicase family. UvrD subfamily.

It carries out the reaction Couples ATP hydrolysis with the unwinding of duplex DNA by translocating in the 3'-5' direction.. The catalysed reaction is ATP + H2O = ADP + phosphate + H(+). Its function is as follows. Helicase IV catalyzes the unwinding of duplex DNA in the 3' to 5' direction with respect to the bound single strand in a reaction that is dependent upon the hydrolysis of ATP. In Escherichia coli (strain K12), this protein is DNA helicase IV (helD).